The primary structure comprises 353 residues: NADH-quinone oxidoreductase subunit H (353 aa).

A run of 9 helical transmembrane segments spans residues 8–28, 75–95, 108–128, 148–168, 178–198, 229–249, 258–278, 297–317, and 319–339; these read LLVY…LFIW, GVFW…FAAI, IGIL…FMAG, VSYE…TGSL, SVPF…AAMA, LFYL…TTLF, LHPV…IIWV, FLLP…LAAP, and MNTA…ILLF.

It belongs to the complex I subunit 1 family. NDH-1 is composed of 14 different subunits. Subunits NuoA, H, J, K, L, M, N constitute the membrane sector of the complex.

The protein resides in the cell membrane. It carries out the reaction a quinone + NADH + 5 H(+)(in) = a quinol + NAD(+) + 4 H(+)(out). Its function is as follows. NDH-1 shuttles electrons from NADH, via FMN and iron-sulfur (Fe-S) centers, to quinones in the respiratory chain. The immediate electron acceptor for the enzyme in this species is believed to be ubiquinone. Couples the redox reaction to proton translocation (for every two electrons transferred, four hydrogen ions are translocated across the cytoplasmic membrane), and thus conserves the redox energy in a proton gradient. This subunit may bind ubiquinone. The chain is NADH-quinone oxidoreductase subunit H from Dehalococcoides mccartyi (strain ATCC BAA-2266 / KCTC 15142 / 195) (Dehalococcoides ethenogenes (strain 195)).